Reading from the N-terminus, the 253-residue chain is MYLEKIVETKREEVAKLKEKKISLKDSFQKGKLTLIAEIKKASPSKGIISTNFDPQRQLELYIKGGADAISILTDEKYFQGSTNILKELRPKTNLPILRKDFIIDPIQIYQSLFLGANVILLIASILTKKEISNFLKISKDIGLEAIVEVHNHQELTKVLDTETEILGINNRDLSDFSLSLRNTEKLLEELEKLGKRRDFYVISESGIKEKSDIDYLRSLEVDGVLIGEALMKENDPVLKIGELFPEKRSNLQ.

This sequence belongs to the TrpC family.

The enzyme catalyses 1-(2-carboxyphenylamino)-1-deoxy-D-ribulose 5-phosphate + H(+) = (1S,2R)-1-C-(indol-3-yl)glycerol 3-phosphate + CO2 + H2O. Its pathway is amino-acid biosynthesis; L-tryptophan biosynthesis; L-tryptophan from chorismate: step 4/5. The protein is Indole-3-glycerol phosphate synthase of Petrotoga mobilis (strain DSM 10674 / SJ95).